The sequence spans 398 residues: Subtilisin-like serine protease EN45_076310 (398 aa).

The signal sequence occupies residues 1 to 19 (MGFLKLLSTSLATLAVVNA). Positions 20-115 (GKLLTANDGD…VEPDMVVNAT (96 aa)) are cleaved as a propeptide — removed in mature form. The region spanning 35–113 (SYIVVMNDGV…KYVEPDMVVN (79 aa)) is the Inhibitor I9 domain. Asn-113 carries N-linked (GlcNAc...) asparagine glycosylation. Residues 124 to 134 (PSWGLSRISSK) form an igE-binding region. The region spanning 125 to 398 (SWGLSRISSK…KLLYNGINAQ (274 aa)) is the Peptidase S8 domain. Asp-157 functions as the Charge relay system in the catalytic mechanism. The segment at 163-170 (GHADFGGR) is igE-binding. Positions 175–195 (TNTADNDDTDGNGHGTHTAST) are disordered. Residue His-188 is the Charge relay system of the active site. Residues 227-245 (IAGMDWAVKDSKSRGATGK) form an igE-binding region. Asn-249 carries an N-linked (GlcNAc...) asparagine glycan. Positions 310–318 (SFTNFGSVV) are igE-binding. Ser-343 serves as the catalytic Charge relay system.

Belongs to the peptidase S8 family.

The protein localises to the secreted. With respect to regulation, inhibited by phenylmethanesulfonyl fluoride (PMSF) and diethyl pyrocarbonate (DEPC), but not by benzamidine. Its function is as follows. Serine protease that hydrolyzes casein, gelatin and human collagen type IV, but not elastin in vitro. Hydrolyzes OCLN of the human lung epithelial cells at 202-Gln-|-Ser-203 and Gln-211-|-Ile-212. This chain is Subtilisin-like serine protease EN45_076310, found in Penicillium chrysogenum (Penicillium notatum).